The primary structure comprises 350 residues: MNLRGLFQDFNPSKFLIYACLLLFSVLLALRLDGIIQWSYWAVFAPIWLWKLMVIVGASVGTGVWARNPQYRAEGETCVEFKAMLIAVGIHLLLLMFEVLVCDRIERGSHFWLLVFMPLFFVSPVSVAACVWGFRHDRSLELEILCSVNILQFIFIALRLDKIIHWPWLVVCVPLWILMSFLCLVVLYYIVWSVLFLRSMDVIAEQRRTHITMALSWMTIVVPLLTFEILLVHKLDGHNAFSCIPIFVPLWLSLITLMATTFGQKGGNHWWFGIRKDFCQFLLEIFPFLREYGNISYDLHHEDSEETEETPVPEPPKIAPMFRKKARVVITQSPGKYVLPPPKLNIEMPD.

7 helical membrane-spanning segments follow: residues 16–36, 41–61, 81–101, 111–131, 177–197, 211–231, and 240–260; these read LIYACLLLFSVLLALRLDGII, WAVFAPIWLWKLMVIVGASVG, FKAMLIAVGIHLLLLMFEVLV, FWLLVFMPLFFVSPVSVAACV, ILMSFLCLVVLYYIVWSVLFL, ITMALSWMTIVVPLLTFEILL, and AFSCIPIFVPLWLSLITLMAT. The mediates interaction with MAP1B stretch occupies residues 298-350; sequence DLHHEDSEETEETPVPEPPKIAPMFRKKARVVITQSPGKYVLPPPKLNIEMPD.

It belongs to the TMEM185 family. In terms of assembly, interacts with MAP1B. In terms of tissue distribution, broadly expressed in brain where it is specifically expressed by neurons (at protein level). Also detected in some cells of arterioles, intestine, lung and testis (at protein level).

The protein resides in the cell projection. It is found in the dendrite. Its subcellular location is the membrane. In Mus musculus (Mouse), this protein is Transmembrane protein 185A (Tmem185a).